Consider the following 269-residue polypeptide: MEMO1 family protein TV1383 (269 aa).

Belongs to the MEMO1 family.

The polypeptide is MEMO1 family protein TV1383 (Thermoplasma volcanium (strain ATCC 51530 / DSM 4299 / JCM 9571 / NBRC 15438 / GSS1)).